A 279-amino-acid polypeptide reads, in one-letter code: Vacuolar iron transporter cccA (279 aa).

Residues 1–44 (MLGGRHSHWSPQDLEEQAFSPYGTFPPSPTESTETSSSISSTRP) are disordered. The span at 30–44 (TESTETSSSISSTRP) shows a compositional bias: low complexity. The next 5 membrane-spanning stretches (helical) occupy residues 55 to 75 (ILGLSDGLTVPFALSAGLSAL), 80 to 100 (VVVVGGLAELVAGAISMGLGG), 185 to 205 (ITLALGYFIGGFIPLIPYFMV), 208 to 228 (VLVALYYSIGIMIFTLLVFGY), and 243 to 263 (IVAGIKGGLQMVVVGGLAAGA).

Belongs to the CCC1 family.

It localises to the vacuole membrane. The catalysed reaction is Fe(2+)(in) = Fe(2+)(out). In terms of biological role, vacuolar iron transporter involved in the transfer of iron from the cytosol to the vacuole for intracellular iron storage. Plays an essential role in iron detoxification during high iron conditions. The protein is Vacuolar iron transporter cccA of Arthroderma benhamiae (strain ATCC MYA-4681 / CBS 112371) (Trichophyton mentagrophytes).